Here is a 681-residue protein sequence, read N- to C-terminus: Cryptochrome-1 (681 aa).

Residues 1-489 (MSGSVSGCGS…AKARLHEALS (489 aa)) are CNT1, binds chromophores to sense blue light and mediate CRY dimerization. In terms of domain architecture, Photolyase/cryptochrome alpha/beta spans 12-141 (GCSIVWFRRD…AVRSFNADLL (130 aa)). Cys80 and Cys190 are joined by a disulfide. FAD is bound at residue Tyr235. Asn238 is a Mg(2+) binding site. An ATP-binding site is contributed by Arg239. Positions 241, 244, and 246 each coordinate Mg(2+). FAD-binding positions include 247 to 251 (TSFLS) and Ser293. Residue His358 coordinates Mg(2+). Residues Asp359 and 390-392 (DAD) each bind FAD. 359-360 (DR) is a binding site for ATP. ATP is bound at residue Asp409. Residues 490-681 (QMWQLEAASR…LNWRRLSQTG (192 aa)) form a CCT1/CCE1, mediates blue light signaling region. Disordered regions lie at residues 525-598 (RDIT…EPAS) and 616-664 (STED…TSSY). The span at 583–598 (MVNTNQAQQRRAEPAS) shows a compositional bias: polar residues. Ser616 is modified (phosphoserine). Phosphothreonine is present on Thr621.

Belongs to the DNA photolyase class-1 family. As to quaternary structure, homodimer. Interacts with ADO1, COP1 and PHYA. Interacts specifically with the dark/far-red (Pr) state of PHYB, but not with the red light-activated (Pfr). Interacts with PIF4 and PIF5 in the nucleus in response to low blue light (LBL). Binds to SPA1 and SPA4 in response to blue light, this interaction prevents SPA1/COP1 complex formation and thus avoid COP1-dependent degradation of the transcription factor HY5 by the proteasome and promotes hypocotyl elongation. Interacts with TCP2. Binding to ATP mediates conformational changes which facilitate flavin binding. It depends on FAD as a cofactor. Requires (6R)-5,10-methylene-5,6,7,8-tetrahydrofolate as cofactor. In terms of processing, autophosphorylated; in response to blue light and when in complex with FAD cofactor. Kinase activity is optimal in the presence of magnesium ions, about 30 percent of the optimal activity in the presence of manganese ions, but inactive with calcium ions. Adopts an open conformation when phosphorylated upon photoexcitation and thus interacts with signaling partner proteins. In terms of tissue distribution, widely expressed. Expressed in the aerial tissues (e.g. cotyledons and leaf primordia), but not detected in the roots.

It localises to the cytoplasm. Its subcellular location is the nucleus. The protein resides in the PML body. With respect to regulation, light exposure induces a conformational change in the C-terminal domain CCT1 required for activity. In terms of biological role, photoreceptor that mediates primarily blue light inhibition of hypocotyl elongation and photoperiodic control of floral initiation, and regulates other light responses, including circadian rhythms, tropic growth, stomata opening, guard cell development, root development, bacterial and viral pathogen responses, abiotic stress responses, cell cycles, programmed cell death, apical dominance, fruit and ovule development, seed dormancy, and magnetoreception. Photoexcited cryptochromes interact with signaling partner proteins to alter gene expression at both transcriptional and post-translational levels and, consequently, regulate the corresponding metabolic and developmental programs. Blue-light absorbing flavoprotein that activates reversible flavin photoreduction via an electron transport chain comprising a tryptophan triad (W-324, W-377 and W-400), accompanied by a large conformational change upon photoexcitation, or via an alternative electron transport that involves small metabolites, including NADPH, NADH, and ATP. The half-life of the activated signaling state is about 5 minutes. Also involved in the detection of blue/green ratio in light (shade under leaf canopies) and subsequent adaptations on plant growth and development. In darkness, the dark reoxidation of flavin occurs and leads to inactivated state. Perceives low blue light (LBL) and responds by directly contacting two bHLH transcription factors, PIF4 and PIF5, at chromatin on E-box variant 5'-CA[CT]GTG-3' to promote their activity and stimulate specific gene expression to adapt global physiology (e.g. hypocotyl elongation and hyponastic growth in low blue light). When activated by high-intensity blue light, catalyzes direct enzymatic conversion of molecular oxygen O(2) to reactive oxygen species (ROS) and hydrogen peroxide H(2)O(2) in vitro. ROS accumulation upon activation by blue light leads to cell death in protoplasts. Seems essential for blue-light-triggered and singlet oxygen-mediated programmed cell death (PCD). Required for the induction of nuclear genes encoding photoprotective components by GATA24 and GATA28 in extreme light intensities that exceed the electron utilization capacity of the chloroplast. Involved in shortening the circadian clock period, especially at 27 degrees Celsius, in blue light (BL) and required to maintain clock genes expression rhythm. Mediates blue light-induced gene expression and hypocotyl elongation through the inhibition of COP1-mediated degradation of the transcription factors BIT1 and HY5 and via the activation of anion channels at the plasma membrane, probably via auxin signaling. Required for the hypocotyl hook formation in darkness. Involved in blue light-dependent stomatal opening, CHS gene expression, transpiration, inhibition of stem growth and increase of root growth, probably by regulating abscisic acid (ABA). Prevents lateral roots growth by inhibiting auxin transport. Necessary for shade avoidance syndrome (SAS), characterized by leaf hyponasty and reduced lamina/petiole ratio, when exposed to blue light attenuation. Together with phototropins, involved in phototropism regulation by various blue light fluence; blue light attenuates phototropism in high fluence rates (100 umol.m-2.s-1) but enhances phototropism in low fluence rates (&lt;1.0 umol.m-2.s-1). Required for blue/UV-A wavelengths-mediated inhibition of explants shoot regeneration in vitro (e.g. new shoot apical meristems regeneration from excised cotyledons). Modulates anthocyanin accumulation in a PHYA-dependent manner in far-red-light. Acts as a PHYA/PHYB-dependent modulator of chlorophyll accumulation in red light. Contributes to most blue light deetiolation responses. May act as a chemical magnetoreceptor, via magnetically sensitive kinetics and quantum yields of photo-induced flavin / tryptophan radical pairs. The effect of near-null magnetic field on flowering is altered by changes of blue light cycle and intensity in a CRY1/CRY2-dependent manner. Involved in the strigolactone signaling that regulates hypocotyl growth in response to blue light. Modulates temperature-dependent growth and physiology maintenance, especially at warm ambient temperatures (e.g. 27 degrees Celsius) and in white light and low-light conditions, via HFR1-dependent activity; this process requires PTAC12/HMR/PAP5 (transcriptional transactivator). Its function is as follows. Implicated in promoting R protein-mediated resistance to Pseudomonas syringae pv. tomato (Pst.) DC3000 under continuous light conditions. Promotes systemic acquired resistance (SAR) and PR gene expression triggered by P.syringae. This chain is Cryptochrome-1, found in Arabidopsis thaliana (Mouse-ear cress).